Reading from the N-terminus, the 524-residue chain is Keratin, type II cytoskeletal 72 (524 aa).

The interval 1 to 136 (MSRQLNLYPG…DPEIQKVRAQ (136 aa)) is head. The coil 1A stretch occupies residues 137 to 172 (EREQIKALNNKFASFIDKVRFLEQQNQVLGTKWELL). The region spanning 137-450 (EREQIKALNN…KLLEGEECRM (314 aa)) is the IF rod domain. Positions 173–191 (QQLDLNNCKNNLEPILEGY) are linker 1. The segment at 192–283 (TSNLRKQLEM…CLYEGEIAQL (92 aa)) is coil 1B. Residues 284–307 (QSHISDTSVILSMDNNRDLDLDSI) are linker 12. Residues 308–446 (IAQVRAQYEE…ATYRKLLEGE (139 aa)) form a coil 2 region. Residues 447–524 (ECRMSGEYPN…SSCATKKASR (78 aa)) form a tail region. The disordered stretch occupies residues 495–524 (KTKGSCGGSELKDAPAKTSGSSCATKKASR).

Belongs to the intermediate filament family. In terms of assembly, heterotetramer of two type I and two type II keratins.

Functionally, has a role in hair formation. Specific component of keratin intermediate filaments in the inner root sheath (IRS) of the hair follicle. This is Keratin, type II cytoskeletal 72 (KRT72) from Bos taurus (Bovine).